The following is a 269-amino-acid chain: HTH-type transcriptional activator ArnR (269 aa).

At 1-218 (MTKSLFDVLK…LLRLTNSYTL (218 aa)) the chain is on the cytoplasmic side. Residues 39–62 (TTEISQTINTSRKSIIDAIRKLVD) constitute a DNA-binding region (H-T-H motif). A helical membrane pass occupies residues 219 to 239 (EMANVKVMGFILISLPLLMYF). Over 240–242 (RDQ) the chain is Extracellular. A helical transmembrane segment spans residues 243–263 (LGLIELPWLYAVIFLALLSVF). The Cytoplasmic segment spans residues 264–269 (AQILSR).

The protein resides in the cell membrane. Its function is as follows. Involved in regulation of archaellar gene expression. Activates flaB transcription upon nutrient starvation by acting on the flaB promoter. This chain is HTH-type transcriptional activator ArnR, found in Sulfolobus acidocaldarius (strain ATCC 33909 / DSM 639 / JCM 8929 / NBRC 15157 / NCIMB 11770).